We begin with the raw amino-acid sequence, 190 residues long: MILLIDNYDSFTYNLAQYLSELNIKVLVKRNDKITLDEIKNLNIQGIIISPCPGGPEDSGISQGIIKYLGNQIPILGVCLGHQTIGHVFGGKIIKAPKLIHGKPSIIFHDGKGVFQNLKNPITATRYHSLIIEKESCPDELEITAWTEDGLIMGIQHKKYKQLQGIQFHPESILTESGKQILQNFINCLN.

The Glutamine amidotransferase type-1 domain maps to 1-190; that stretch reads MILLIDNYDS…ILQNFINCLN (190 aa). 52–54 serves as a coordination point for L-glutamine; the sequence is CPG. Cys-79 functions as the Nucleophile; for GATase activity in the catalytic mechanism. L-glutamine-binding positions include Gln-83 and 129-130; that span reads SL. Residues His-169 and Glu-171 contribute to the active site.

In terms of assembly, tetramer of two components I and two components II.

The protein resides in the plastid. Its subcellular location is the cyanelle. The enzyme catalyses chorismate + L-glutamine = anthranilate + pyruvate + L-glutamate + H(+). It participates in amino-acid biosynthesis; L-tryptophan biosynthesis; L-tryptophan from chorismate: step 1/5. The protein is Anthranilate synthase component 2 (trpG) of Cyanophora paradoxa.